The primary structure comprises 1044 residues: Diacylglycerol lipase-alpha (1044 aa).

At 1-22 (MPGIVVFRRRWSVGSDDLVLPA) the chain is on the cytoplasmic side. The helical transmembrane segment at 23 to 43 (IFLFLLHTTWFVILSVVLFGL) threads the bilayer. The Extracellular segment spans residues 44–60 (VYNPHEACSLNLVDHGR). The helical transmembrane segment at 61 to 81 (GYLGILLSCMIAEMAIIWLSM) threads the bilayer. At 82 to 101 (RGGILYTEPRDSMQYVLYVR) the chain is on the cytoplasmic side. A helical transmembrane segment spans residues 102–122 (LAILVIEFIYAIVGIVWLTQY). Over 123-136 (YTSCNDLTAKNVTL) the chain is Extracellular. Residue Asn-133 is glycosylated (N-linked (GlcNAc...) asparagine). Residues 137-157 (GMVVCNWVVILSVCITVLCVF) traverse the membrane as a helical segment. Residues 158–1044 (DPTGRTFVKL…KQDDLVISAR (887 aa)) are Cytoplasmic-facing. Active-site charge relay system residues include Ser-472 and Asp-524. Residues Ser-728, Ser-730, Ser-733, Ser-744, Ser-784, Ser-786, Ser-808, Ser-810, Ser-835, Ser-849, and Ser-954 each carry the phosphoserine modification. Positions 848-897 (LSKHSQDTQPLEAALGSGGVTPERPPSATIEEEEAAGGSEGGGVAPRGEL) are disordered. The disordered stretch occupies residues 1013–1044 (QECLATDKIRTSTPTGHGASPTKQDDLVISAR). Residue Thr-1025 is modified to Phosphothreonine.

The protein belongs to the AB hydrolase superfamily. Lipase family. In terms of assembly, interacts (via C-terminal) with CAMK2A; leading to the phosphorylation and inhibition of DAGLA enzymatic activity. Interacts (via PPXXF motif) with HOMER1 and HOMER2; this interaction is required for DAGLA membrane localization. Requires Ca(2+) as cofactor. Phosphorylated at Ser-784 and Ser-810 by CAMK2A; phosphorylation by CAMK2A inhibits diacylglycerol lipase activity. Highly expressed by principal cells in the hippocampus. In embryonic brains, it is present in axonal tracts, while in adults it localizes to dendritic fields, correlating with the developmental change in requirement for 2-AG synthesis from the pre- to the postsynaptic compartment. Concentrated in heads of dendritic spines throughout the hippocampal formation. Highly compartmentalized into a wide perisynaptic annulus around the postsynaptic density of axospinous contacts but not intrasynaptically (at protein level).

Its subcellular location is the cell membrane. The protein resides in the cell projection. It is found in the dendritic spine membrane. It localises to the postsynaptic density membrane. The protein localises to the early endosome membrane. It carries out the reaction a 1,2-diacyl-sn-glycerol + H2O = a 2-acylglycerol + a fatty acid + H(+). It catalyses the reaction 1-octadecanoyl-2-(5Z,8Z,11Z,14Z-eicosatetraenoyl)-sn-glycerol + H2O = 2-(5Z,8Z,11Z,14Z-eicosatetraenoyl)-glycerol + octadecanoate + H(+). The enzyme catalyses 1,2-di-(9Z-octadecenoyl)-sn-glycerol + H2O = 2-(9Z-octadecenoyl)-glycerol + (9Z)-octadecenoate + H(+). The catalysed reaction is 1-(9Z-octadecenoyl)-2-(5Z,8Z,11Z,14Z-eicosatetraenoyl)-sn-glycerol + H2O = 2-(5Z,8Z,11Z,14Z-eicosatetraenoyl)-glycerol + (9Z)-octadecenoate + H(+). It carries out the reaction 1-(9Z-octadecenoyl)-2-octadecanoyl-sn-glycerol + H2O = 2-octadecanoylglycerol + (9Z)-octadecenoate + H(+). It catalyses the reaction 1-(9Z-octadecenoyl)-2-(9Z,12Z-octadecadienoyl)-sn-glycerol + H2O = 2-(9Z,12Z-octadecadienoyl)-glycerol + (9Z)-octadecenoate + H(+). The enzyme catalyses 1-(9Z-octadecenoyl)-2-O-(5Z,8Z,11Z,14Z-eicosatetraenyl)-sn-glycerol + H2O = 2-O-(5Z,8Z,11Z,14Z)-eicosatetraenylglycerol + (9Z)-octadecenoate + H(+). Inhibited by 1,2,3-triazole urea covalent inhibitor KT172, DH376 and DO34. Inhibited by p-hydroxy-mercuri-benzoate and HgCl(2), but not to PMSF. Also inhibited by RHC80267. Diacylglycerol lipase activity is inhibited by the phosphorylation of Ser-784 and Ser-810 by CAMK2A. In terms of biological role, serine hydrolase that hydrolyzes arachidonic acid-esterified diacylglycerols (DAGs) to produce the principal endocannabinoid (eCB), 2-arachidonoylglycerol (2-AG). Preferentially hydrolyzes sn-1 fatty acids from diacylglycerols (DAG) that contain arachidonic acid (AA) esterified at the sn-2 position to biosynthesize 2-AG. Has negligible activity against other lipids including monoacylglycerols and phospholipids. Plays a key role in regulating 2-AG signaling in the central nervous system (CNS). Controls the activity of 2-AG as a retrograde messenger at neuronal synapses. Supports axonal growth during development and adult neurogenesis. Plays a role for eCB signaling in the physiological regulation of anxiety and depressive behaviors. Also regulates neuroinflammatory responses in the brain, in particular, LPS-induced microglial activation. The chain is Diacylglycerol lipase-alpha (Dagla) from Mus musculus (Mouse).